A 446-amino-acid chain; its full sequence is MREIVHLQTGQCRNQIGAKFWEVVSDEHGIEPDGLYKGNNDLQLERISVYYNEVGANKYVPRAVLVDLEPGTMDSVRSGPLGSLFRPDNFVFGQSGGGNNWAKGHYTEGAELVDAVLDVVRKEAEGTDCLQGFQITHSLGGGTGAGMGTLLISKIREEYPDRMMCTYSVVPSPKVSDTVVEPYNATLSVHQLVENSDETFCIDNEALYDICFRTLKLTTPTYGDLNHLISIVMSGITTCLRFPGQLNSDLRKLAVNMVPFPRLHFFMPGVCPLTARGSQQYRAVTVPELTQQMFDAKNMMAASDPRHGRYLTVAAVFRGKVSMKEVEEQMQNVQNKNSAYFVEWIPNNVLTAQCDIPPRGCKMAVTFLGNSTAIQELFKRVNDQFAAMFKRKAFLHWYTQEGMDEMEFTEAESNMQDLVAEYQQYQDATADEEEGEYEEEPAEEEQ.

8 residues coordinate GTP: Q11, E69, S138, G142, T143, G144, N204, and N226. Residue E69 coordinates Mg(2+). The disordered stretch occupies residues 423–446; the sequence is QQYQDATADEEEGEYEEEPAEEEQ. Residues 429-446 show a composition bias toward acidic residues; it reads TADEEEGEYEEEPAEEEQ.

The protein belongs to the tubulin family. In terms of assembly, dimer of alpha and beta chains. A typical microtubule is a hollow water-filled tube with an outer diameter of 25 nm and an inner diameter of 15 nM. Alpha-beta heterodimers associate head-to-tail to form protofilaments running lengthwise along the microtubule wall with the beta-tubulin subunit facing the microtubule plus end conferring a structural polarity. Microtubules usually have 13 protofilaments but different protofilament numbers can be found in some organisms and specialized cells. Mg(2+) serves as cofactor.

It localises to the cytoplasm. Its subcellular location is the cytoskeleton. Tubulin is the major constituent of microtubules, a cylinder consisting of laterally associated linear protofilaments composed of alpha- and beta-tubulin heterodimers. Microtubules grow by the addition of GTP-tubulin dimers to the microtubule end, where a stabilizing cap forms. Below the cap, tubulin dimers are in GDP-bound state, owing to GTPase activity of alpha-tubulin. The polypeptide is Tubulin beta chain (Pleurotus sajor-caju (Oyster mushroom)).